We begin with the raw amino-acid sequence, 349 residues long: 4-hydroxythreonine-4-phosphate dehydrogenase (349 aa).

2 residues coordinate substrate: H141 and T142. A divalent metal cation is bound by residues H176, H221, and H276. K284, N293, and R302 together coordinate substrate.

The protein belongs to the PdxA family. As to quaternary structure, homodimer. Zn(2+) serves as cofactor. The cofactor is Mg(2+). Requires Co(2+) as cofactor.

It is found in the cytoplasm. The catalysed reaction is 4-(phosphooxy)-L-threonine + NAD(+) = 3-amino-2-oxopropyl phosphate + CO2 + NADH. Its pathway is cofactor biosynthesis; pyridoxine 5'-phosphate biosynthesis; pyridoxine 5'-phosphate from D-erythrose 4-phosphate: step 4/5. In terms of biological role, catalyzes the NAD(P)-dependent oxidation of 4-(phosphooxy)-L-threonine (HTP) into 2-amino-3-oxo-4-(phosphooxy)butyric acid which spontaneously decarboxylates to form 3-amino-2-oxopropyl phosphate (AHAP). In Methylorubrum extorquens (strain CM4 / NCIMB 13688) (Methylobacterium extorquens), this protein is 4-hydroxythreonine-4-phosphate dehydrogenase.